The sequence spans 228 residues: 6-carboxyhexanoate--CoA ligase (228 aa).

Belongs to the BioW family. In terms of assembly, homodimer. Mg(2+) serves as cofactor.

The enzyme catalyses heptanedioate + ATP + CoA = 6-carboxyhexanoyl-CoA + AMP + diphosphate. Its pathway is metabolic intermediate metabolism; pimeloyl-CoA biosynthesis; pimeloyl-CoA from pimelate: step 1/1. Catalyzes the transformation of pimelate into pimeloyl-CoA with concomitant hydrolysis of ATP to AMP. The sequence is that of 6-carboxyhexanoate--CoA ligase from Staphylococcus epidermidis (strain ATCC 12228 / FDA PCI 1200).